The following is a 270-amino-acid chain: Shikimate dehydrogenase (NADP(+)) (270 aa).

Shikimate is bound by residues S15–S17 and T62. The active-site Proton acceptor is the K66. NADP(+) is bound at residue D78. Shikimate is bound by residues N87 and D103. NADP(+) is bound by residues G128–A132, N152–R157, and L213. Y215 serves as a coordination point for shikimate. An NADP(+)-binding site is contributed by G237.

Belongs to the shikimate dehydrogenase family. As to quaternary structure, homodimer.

It catalyses the reaction shikimate + NADP(+) = 3-dehydroshikimate + NADPH + H(+). The protein operates within metabolic intermediate biosynthesis; chorismate biosynthesis; chorismate from D-erythrose 4-phosphate and phosphoenolpyruvate: step 4/7. Its function is as follows. Involved in the biosynthesis of the chorismate, which leads to the biosynthesis of aromatic amino acids. Catalyzes the reversible NADPH linked reduction of 3-dehydroshikimate (DHSA) to yield shikimate (SA). In Halorhodospira halophila (strain DSM 244 / SL1) (Ectothiorhodospira halophila (strain DSM 244 / SL1)), this protein is Shikimate dehydrogenase (NADP(+)).